The chain runs to 155 residues: Large ribosomal subunit protein bL17 (155 aa).

The protein belongs to the bacterial ribosomal protein bL17 family. As to quaternary structure, part of the 50S ribosomal subunit. Contacts protein L32.

This is Large ribosomal subunit protein bL17 from Syntrophotalea carbinolica (strain DSM 2380 / NBRC 103641 / GraBd1) (Pelobacter carbinolicus).